The chain runs to 349 residues: Hydroxymethylglutaryl-CoA synthase (349 aa).

Residues Asp30 and Ala31 each coordinate (3S)-3-hydroxy-3-methylglutaryl-CoA. The Proton donor/acceptor role is filled by Glu82. (3S)-3-hydroxy-3-methylglutaryl-CoA contacts are provided by Cys114 and Thr155. The active-site Acyl-thioester intermediate is the Cys114. Arg203 contributes to the CoA binding site. Residues Thr205 and His238 each contribute to the (3S)-3-hydroxy-3-methylglutaryl-CoA site. The active-site Proton donor/acceptor is the His238. Lys243 is a CoA binding site. (3S)-3-hydroxy-3-methylglutaryl-CoA is bound by residues Asn270 and Ser300.

The protein belongs to the thiolase-like superfamily. Archaeal HMG-CoA synthase family. In terms of assembly, interacts with acetoacetyl-CoA thiolase that catalyzes the precedent step in the pathway and with a DUF35 protein. The acetoacetyl-CoA thiolase/HMG-CoA synthase complex channels the intermediate via a fused CoA-binding site, which allows for efficient coupling of the endergonic thiolase reaction with the exergonic HMGCS reaction.

The catalysed reaction is acetoacetyl-CoA + acetyl-CoA + H2O = (3S)-3-hydroxy-3-methylglutaryl-CoA + CoA + H(+). The protein operates within metabolic intermediate biosynthesis; (R)-mevalonate biosynthesis; (R)-mevalonate from acetyl-CoA: step 2/3. In terms of biological role, catalyzes the condensation of acetyl-CoA with acetoacetyl-CoA to form 3-hydroxy-3-methylglutaryl-CoA (HMG-CoA). Functions in the mevalonate (MVA) pathway leading to isopentenyl diphosphate (IPP), a key precursor for the biosynthesis of isoprenoid compounds that are building blocks of archaeal membrane lipids. This is Hydroxymethylglutaryl-CoA synthase from Methanococcus vannielii (strain ATCC 35089 / DSM 1224 / JCM 13029 / OCM 148 / SB).